The chain runs to 578 residues: Dystrotelin (578 aa).

A ZZ-type zinc finger spans residues 223-279 (THPARCTLCRTFPITGLRYRCLKCLNFDICQMCFLSGLHSKSHQKSHPVIEHCIQMS). Residues Cys228, Cys231, Cys243, Cys246, Cys252, Cys255, His265, and His269 each contribute to the Zn(2+) site. A coiled-coil region spans residues 322–351 (HHAQARLLKKQLNQYKDKLQAIYTSQEERI). The segment at 382–475 (RLQPPGPSSS…QSQTQKMPQK (94 aa)) is disordered. Composition is skewed to basic and acidic residues over residues 399-410 (KVDHSSTEKVPK) and 431-451 (PKLDEVDRSHRSHTNAEHALR). Polar residues predominate over residues 455-472 (SPETTLHSTRAQSQTQKM). Residues 503–537 (ALAAVEKKEAGNIKERKDELEEEELQELLSKLMDA) are a coiled coil.

It is found in the cell membrane. The chain is Dystrotelin (DYTN) from Homo sapiens (Human).